Reading from the N-terminus, the 349-residue chain is GDP-mannose:glycolipid 4-beta-D-mannosyltransferase (349 aa).

An N-terminal signal peptide occupies residues 1 to 14 (MSASASLPVTRAAA).

Belongs to the glycosyltransferase 94 family.

It localises to the cell inner membrane. It catalyses the reaction beta-D-GlcA-(1-&gt;2)-alpha-D-Man-(1-&gt;3)-beta-D-Glc-(1-&gt;4)-alpha-D-Glc-di-trans,octa-cis-undecaprenyl diphosphate + GDP-alpha-D-mannose = beta-D-Man-(1-&gt;4)-beta-D-GlcA-(1-&gt;2)-alpha-D-Man-(1-&gt;3)-beta-D-Glc-(1-&gt;4)-alpha-D-Glc-di-trans,octa-cis-undecaprenyl diphosphate + GDP + H(+). It functions in the pathway glycan biosynthesis; xanthan biosynthesis. Nonprocessive beta-mannosyltransferase that catalyzes the transfer of a mannose residue from GDP-mannose to glucuronic acid-beta-1,2-mannose-alpha-1,3-glucose-beta-1,4-glucose-PP-polyisoprenyl to form the lipid-linked pentasaccharide repeating unit of xanthan, Man-GlcA-Man-Glc(2)-PP-Pol. Is involved in the biosynthesis of the exopolysaccharide xanthan. This Xanthomonas campestris pv. campestris (strain ATCC 33913 / DSM 3586 / NCPPB 528 / LMG 568 / P 25) protein is GDP-mannose:glycolipid 4-beta-D-mannosyltransferase (gumI).